Reading from the N-terminus, the 246-residue chain is tRNA (guanine-N(7)-)-methyltransferase (246 aa).

The S-adenosyl-L-methionine site is built by Glu77, Glu102, Asp129, and Asp152. Residue Asp152 is part of the active site. Residues Lys156, Asp188, and 225-228 (TKFE) contribute to the substrate site.

Belongs to the class I-like SAM-binding methyltransferase superfamily. TrmB family.

It carries out the reaction guanosine(46) in tRNA + S-adenosyl-L-methionine = N(7)-methylguanosine(46) in tRNA + S-adenosyl-L-homocysteine. It functions in the pathway tRNA modification; N(7)-methylguanine-tRNA biosynthesis. In terms of biological role, catalyzes the formation of N(7)-methylguanine at position 46 (m7G46) in tRNA. This is tRNA (guanine-N(7)-)-methyltransferase from Haemophilus influenzae (strain PittGG).